A 254-amino-acid polypeptide reads, in one-letter code: tRNA (guanine-N(7)-)-methyltransferase (254 aa).

Basic and acidic residues predominate over residues 1–11; the sequence is MSISDNSREEL. Residues 1–25 are disordered; the sequence is MSISDNSREELGELPAGRPLQSEFN. Residues glutamate 83, glutamate 108, aspartate 135, and aspartate 158 each contribute to the S-adenosyl-L-methionine site. Aspartate 158 is an active-site residue. Lysine 162 contributes to the substrate binding site. Positions 164–169 are interaction with RNA; sequence RHNKRR. Substrate-binding positions include aspartate 194 and 232 to 235; that span reads TKFE.

The protein belongs to the class I-like SAM-binding methyltransferase superfamily. TrmB family.

It carries out the reaction guanosine(46) in tRNA + S-adenosyl-L-methionine = N(7)-methylguanosine(46) in tRNA + S-adenosyl-L-homocysteine. The protein operates within tRNA modification; N(7)-methylguanine-tRNA biosynthesis. Its function is as follows. Catalyzes the formation of N(7)-methylguanine at position 46 (m7G46) in tRNA. This chain is tRNA (guanine-N(7)-)-methyltransferase, found in Corynebacterium efficiens (strain DSM 44549 / YS-314 / AJ 12310 / JCM 11189 / NBRC 100395).